Reading from the N-terminus, the 316-residue chain is tRNA dimethylallyltransferase (316 aa).

An ATP-binding site is contributed by 17–24 (GPTASGKT). 19–24 (TASGKT) contacts substrate. Interaction with substrate tRNA regions lie at residues 42-45 (DSAL), 166-170 (QRLSR), and 247-252 (RCVGYR).

The protein belongs to the IPP transferase family. Monomer. Mg(2+) serves as cofactor.

The catalysed reaction is adenosine(37) in tRNA + dimethylallyl diphosphate = N(6)-dimethylallyladenosine(37) in tRNA + diphosphate. Functionally, catalyzes the transfer of a dimethylallyl group onto the adenine at position 37 in tRNAs that read codons beginning with uridine, leading to the formation of N6-(dimethylallyl)adenosine (i(6)A). This Salmonella paratyphi C (strain RKS4594) protein is tRNA dimethylallyltransferase.